The following is a 156-amino-acid chain: VapC ribonuclease AF_1683 (156 aa).

In terms of domain architecture, PINc spans 4 to 125 (LIDTGIFFGF…KLISYDSRFS (122 aa)). Residues aspartate 6 and aspartate 103 each coordinate Mg(2+).

The protein belongs to the PINc/VapC protein family. Requires Mg(2+) as cofactor.

Its function is as follows. Toxic component of a type II toxin-antitoxin (TA) system. An RNase. This chain is VapC ribonuclease AF_1683, found in Archaeoglobus fulgidus (strain ATCC 49558 / DSM 4304 / JCM 9628 / NBRC 100126 / VC-16).